Reading from the N-terminus, the 127-residue chain is Aspartate 1-decarboxylase (127 aa).

Ser25 functions as the Schiff-base intermediate with substrate; via pyruvic acid in the catalytic mechanism. Ser25 is subject to Pyruvic acid (Ser). Thr57 is a binding site for substrate. The Proton donor role is filled by Tyr58. Substrate is bound at residue 73-75 (GAA).

The protein belongs to the PanD family. As to quaternary structure, heterooctamer of four alpha and four beta subunits. Requires pyruvate as cofactor. Is synthesized initially as an inactive proenzyme, which is activated by self-cleavage at a specific serine bond to produce a beta-subunit with a hydroxyl group at its C-terminus and an alpha-subunit with a pyruvoyl group at its N-terminus.

The protein localises to the cytoplasm. The enzyme catalyses L-aspartate + H(+) = beta-alanine + CO2. The protein operates within cofactor biosynthesis; (R)-pantothenate biosynthesis; beta-alanine from L-aspartate: step 1/1. In terms of biological role, catalyzes the pyruvoyl-dependent decarboxylation of aspartate to produce beta-alanine. This is Aspartate 1-decarboxylase from Geobacillus sp. (strain WCH70).